A 585-amino-acid polypeptide reads, in one-letter code: Arginine--tRNA ligase (585 aa).

Positions 130 to 140 match the 'HIGH' region motif; that stretch reads ANPTGPMHVGH.

Belongs to the class-I aminoacyl-tRNA synthetase family. As to quaternary structure, monomer.

The protein resides in the cytoplasm. The enzyme catalyses tRNA(Arg) + L-arginine + ATP = L-arginyl-tRNA(Arg) + AMP + diphosphate. The sequence is that of Arginine--tRNA ligase from Methylorubrum extorquens (strain PA1) (Methylobacterium extorquens).